Reading from the N-terminus, the 243-residue chain is MGRKVHPIGFRLGYIKDWQSKWFAEGEEYTRQLHEDIELRKLISKELQSAGVSRIEIERSANKIEISVYTAKPGIVIGKRGTNVDTLKSALERKTGKKIKLNIKEIHQPELDAQLVAESIGEQITRRVSYKRAMKQAVQRAMRLGAQGVKVRCSGRLGGAEMSRVHEEAEGRVPRHTLRADIDYAQVHAHTTYGRIGVKVWIYKGEVFPNQVAKSPAEPATTAPTPAPERRERQPRRNSNASA.

In terms of domain architecture, KH type-2 spans 39–107 (LRKLISKELQ…KIKLNIKEIH (69 aa)). Residues 212 to 243 (VAKSPAEPATTAPTPAPERRERQPRRNSNASA) form a disordered region.

This sequence belongs to the universal ribosomal protein uS3 family. In terms of assembly, part of the 30S ribosomal subunit. Forms a tight complex with proteins S10 and S14.

Its function is as follows. Binds the lower part of the 30S subunit head. Binds mRNA in the 70S ribosome, positioning it for translation. This Chloroflexus aurantiacus (strain ATCC 29364 / DSM 637 / Y-400-fl) protein is Small ribosomal subunit protein uS3.